Here is a 177-residue protein sequence, read N- to C-terminus: Bifunctional protein PyrR (177 aa).

The PRPP-binding motif lies at 99 to 111 (VVLVDDVLFTGRT).

This sequence belongs to the purine/pyrimidine phosphoribosyltransferase family. PyrR subfamily.

The enzyme catalyses UMP + diphosphate = 5-phospho-alpha-D-ribose 1-diphosphate + uracil. In terms of biological role, regulates the transcription of the pyrimidine nucleotide (pyr) operon in response to exogenous pyrimidines. Its function is as follows. Also displays a weak uracil phosphoribosyltransferase activity which is not physiologically significant. The protein is Bifunctional protein PyrR of Citrifermentans bemidjiense (strain ATCC BAA-1014 / DSM 16622 / JCM 12645 / Bem) (Geobacter bemidjiensis).